Reading from the N-terminus, the 222-residue chain is Putative germin-like protein subfamily 1 member 9 (222 aa).

The signal sequence occupies residues 1–22 (MKSFSFLAVLSILAITLSLSKA). A disulfide bond links cysteine 32 and cysteine 49. A Cupin type-1 domain is found at 63–213 (TGLHEARPPN…AFQVDPKIVM (151 aa)). The N-linked (GlcNAc...) asparagine glycan is linked to asparagine 78. Residues histidine 111, histidine 113, glutamate 118, and histidine 159 each contribute to the Mn(2+) site.

It belongs to the germin family. As to quaternary structure, oligomer (believed to be a pentamer but probably hexamer).

It is found in the secreted. The protein localises to the extracellular space. It localises to the apoplast. Its function is as follows. May play a role in plant defense. Probably has no oxalate oxidase activity even if the active site is conserved. The sequence is that of Putative germin-like protein subfamily 1 member 9 from Arabidopsis thaliana (Mouse-ear cress).